The sequence spans 39 residues: Cytochrome b559 subunit beta (39 aa).

Residues 14-30 form a helical membrane-spanning segment; sequence WLAVHGLAVPTVFFLGS. Residue His18 participates in heme binding.

The protein belongs to the PsbE/PsbF family. In terms of assembly, heterodimer of an alpha subunit and a beta subunit. PSII is composed of 1 copy each of membrane proteins PsbA, PsbB, PsbC, PsbD, PsbE, PsbF, PsbH, PsbI, PsbJ, PsbK, PsbL, PsbM, PsbT, PsbX, PsbY, PsbZ, Psb30/Ycf12, at least 3 peripheral proteins of the oxygen-evolving complex and a large number of cofactors. It forms dimeric complexes. Heme b is required as a cofactor.

It is found in the plastid. It localises to the chloroplast thylakoid membrane. This b-type cytochrome is tightly associated with the reaction center of photosystem II (PSII). PSII is a light-driven water:plastoquinone oxidoreductase that uses light energy to abstract electrons from H(2)O, generating O(2) and a proton gradient subsequently used for ATP formation. It consists of a core antenna complex that captures photons, and an electron transfer chain that converts photonic excitation into a charge separation. This chain is Cytochrome b559 subunit beta, found in Gnetum gnemon (Spanish joint-fir).